Here is a 545-residue protein sequence, read N- to C-terminus: Chaperonin GroEL (545 aa).

ATP-binding positions include 29 to 32, Lys50, 86 to 90, Gly413, 479 to 481, and Asp496; these read TLGP, DGTTT, and NAA. The interval 525 to 545 is disordered; that stretch reads KPEKEKAPAAAGAPDMGGMDF. Positions 532-545 are enriched in low complexity; it reads PAAAGAPDMGGMDF.

The protein belongs to the chaperonin (HSP60) family. As to quaternary structure, forms a cylinder of 14 subunits composed of two heptameric rings stacked back-to-back. Interacts with the co-chaperonin GroES.

It is found in the cytoplasm. It catalyses the reaction ATP + H2O + a folded polypeptide = ADP + phosphate + an unfolded polypeptide.. Together with its co-chaperonin GroES, plays an essential role in assisting protein folding. The GroEL-GroES system forms a nano-cage that allows encapsulation of the non-native substrate proteins and provides a physical environment optimized to promote and accelerate protein folding. The polypeptide is Chaperonin GroEL (Deinococcus geothermalis (strain DSM 11300 / CIP 105573 / AG-3a)).